We begin with the raw amino-acid sequence, 475 residues long: Sulfate adenylyltransferase subunit 1 (475 aa).

Residues 25–241 (KSLLRFLTCG…LENIEIQRVV (217 aa)) enclose the tr-type G domain. The interval 34-41 (GSVDDGKS) is G1. 34 to 41 (GSVDDGKS) is a binding site for GTP. The tract at residues 92–96 (GITID) is G2. Positions 113–116 (DTPG) are G3. Residues 113–117 (DTPGH) and 168–171 (NKMD) contribute to the GTP site. The G4 stretch occupies residues 168–171 (NKMD). Positions 206–208 (SAL) are G5.

This sequence belongs to the TRAFAC class translation factor GTPase superfamily. Classic translation factor GTPase family. CysN/NodQ subfamily. In terms of assembly, heterodimer composed of CysD, the smaller subunit, and CysN.

The catalysed reaction is sulfate + ATP + H(+) = adenosine 5'-phosphosulfate + diphosphate. It participates in sulfur metabolism; hydrogen sulfide biosynthesis; sulfite from sulfate: step 1/3. Functionally, with CysD forms the ATP sulfurylase (ATPS) that catalyzes the adenylation of sulfate producing adenosine 5'-phosphosulfate (APS) and diphosphate, the first enzymatic step in sulfur assimilation pathway. APS synthesis involves the formation of a high-energy phosphoric-sulfuric acid anhydride bond driven by GTP hydrolysis by CysN coupled to ATP hydrolysis by CysD. The sequence is that of Sulfate adenylyltransferase subunit 1 from Cronobacter sakazakii (strain ATCC BAA-894) (Enterobacter sakazakii).